Reading from the N-terminus, the 251-residue chain is Eukaryotic translation initiation factor 4E-3 (251 aa).

Residues 200 to 251 (DSSARTSSTVKPRICLPAKDPAPVKEKGPAATTSPSNPGTEATGTSPATPTP) form a disordered region. The segment covering 230–251 (ATTSPSNPGTEATGTSPATPTP) has biased composition (polar residues).

Belongs to the eukaryotic initiation factor 4E family. As to quaternary structure, eIF4F is a multi-subunit complex, the composition of which varies with external and internal environmental conditions. It is composed of at least eIF4A, eIF4E and eIF4G. eIF4E is also known to interact with other partners. Interacts with mxt. Component of the pid-1 variant of the PETISCO complex (also called the pid-3, erh-2, tofu-6, and ife-3 small RNA complex) containing at least pid-1, tofu-6, ife-3, pid-3, and erh-2, which is required for the biogenesis of a class of 21 nucleotide PIWI-interacting RNAs (piRNAs) that possess a uracil residue at the 5'-end (also called 21U-RNAs). Component of the tost-1 variant of the PETISCO complex (also called the pid-3, erh-2, tofu-6, and ife-3 small RNA complex) containing at least tost-1, tofu-6, ife-3, pid-3, and erh-2, which plays an essential role in embryogenesis. Within the pid-1 and tost-1 variants of the PETISCO complexes interacts with tofu-6 (via C-terminus). In contrast to the pid-1 variant of the PETISCO complex, the tost-1 variant of the PETISCO complex plays a minor role in the biogenesis of 21U-RNAs. Highly expressed in the germline (at protein level).

It is found in the cytoplasmic granule. Its subcellular location is the cytoplasm. The protein resides in the perinuclear region. Its function is as follows. Recognizes and binds the 7-methylguanosine-containing mRNA cap during an early step in the initiation of protein synthesis and facilitates ribosome binding by inducing the unwinding of the mRNAs secondary structures. All 5 eIF4E proteins bind monomethyl cap structures. Only ife-1, ife-2 and ife-5 bind trimethyl cap structures which result from trans-splicing. Translation of trimethyl cap structure mRNAs may be regulated by intracellular redox state; disulfide bonds change the width and depth of the cap-binding cavity determining selectivity to mRNA caps. Ife-3 is essential for viability. Component of the pid-1 and tost-1 variants of the PETISCO complexes, which have roles in the biogenesis of a class of 21 nucleotide PIWI-interacting RNAs (piRNAs) that possess a uracil residue at the 5'-end (also called 21U-RNAs) and embryogenesis, respectively. Within the pid-1 variant of the PETISCO complex binds to capped 21U-RNA precursor molecules, possibly playing a role in the processing of the 5' end of the molecules to promote binding of other complex components such as pid-3. However, it is not essential for the biogenesis of 21U-RNAs by itself. Within the tost-1 variant of the PETISCO complex binds to splice leader SL1 RNA fragments to possibly play a role in their processing. The polypeptide is Eukaryotic translation initiation factor 4E-3 (Caenorhabditis elegans).